A 625-amino-acid chain; its full sequence is Probable potassium transport system protein Kup 2 (625 aa).

The next 12 membrane-spanning stretches (helical) occupy residues 15-35, 52-72, 98-118, 134-154, 164-184, 203-223, 246-266, 284-304, 336-356, 365-385, 394-414, and 417-437; these read LSFA…LYAF, ILSL…LVIV, GGWL…DGIL, LSPN…FFLF, IGIY…VLGF, IYFF…VFLV, WFAV…AFVL, FLPV…QAII, VYLP…VVIF, AYGI…GIIA, FKVM…AGNI, and LLTG…VMYT.

Belongs to the HAK/KUP transporter (TC 2.A.72) family.

The protein resides in the cell inner membrane. The catalysed reaction is K(+)(in) + H(+)(in) = K(+)(out) + H(+)(out). Transport of potassium into the cell. Likely operates as a K(+):H(+) symporter. In Legionella pneumophila subsp. pneumophila (strain Philadelphia 1 / ATCC 33152 / DSM 7513), this protein is Probable potassium transport system protein Kup 2.